Consider the following 104-residue polypeptide: Large ribosomal subunit protein bL21 (104 aa).

This sequence belongs to the bacterial ribosomal protein bL21 family. As to quaternary structure, part of the 50S ribosomal subunit. Contacts protein L20.

Its function is as follows. This protein binds to 23S rRNA in the presence of protein L20. The protein is Large ribosomal subunit protein bL21 of Clostridium botulinum (strain ATCC 19397 / Type A).